The following is a 562-amino-acid chain: Urocanate hydratase (562 aa).

Residues 53–54, glutamine 131, 177–179, glutamate 197, arginine 202, 243–244, 268–272, 278–279, and tyrosine 327 contribute to the NAD(+) site; these read GG, GMG, NA, QTSAH, and YL. Cysteine 415 is an active-site residue. NAD(+) is bound at residue glycine 497.

Belongs to the urocanase family. It depends on NAD(+) as a cofactor.

The protein localises to the cytoplasm. It carries out the reaction 4-imidazolone-5-propanoate = trans-urocanate + H2O. The protein operates within amino-acid degradation; L-histidine degradation into L-glutamate; N-formimidoyl-L-glutamate from L-histidine: step 2/3. In terms of biological role, catalyzes the conversion of urocanate to 4-imidazolone-5-propionate. This chain is Urocanate hydratase, found in Chelativorans sp. (strain BNC1).